A 118-amino-acid polypeptide reads, in one-letter code: Large ribosomal subunit protein bL20 (118 aa).

The protein belongs to the bacterial ribosomal protein bL20 family.

Functionally, binds directly to 23S ribosomal RNA and is necessary for the in vitro assembly process of the 50S ribosomal subunit. It is not involved in the protein synthesizing functions of that subunit. This Thermotoga neapolitana (strain ATCC 49049 / DSM 4359 / NBRC 107923 / NS-E) protein is Large ribosomal subunit protein bL20.